A 156-amino-acid chain; its full sequence is Small ribosomal subunit protein uS7 (156 aa).

Belongs to the universal ribosomal protein uS7 family. In terms of assembly, part of the 30S ribosomal subunit. Contacts proteins S9 and S11.

One of the primary rRNA binding proteins, it binds directly to 16S rRNA where it nucleates assembly of the head domain of the 30S subunit. Is located at the subunit interface close to the decoding center, probably blocks exit of the E-site tRNA. This chain is Small ribosomal subunit protein uS7, found in Bacillus cereus (strain G9842).